The primary structure comprises 347 residues: Protein-glutamate methylesterase/protein-glutamine glutaminase 3 (347 aa).

One can recognise a Response regulatory domain in the interval 3–120; the sequence is QVFIVDDSAV…KNFLEESEIL (118 aa). Position 54 is a 4-aspartylphosphate (Asp-54). The CheB-type methylesterase domain occupies 159-347; sequence IDTTDKLIAI…SKIVGEVQYF (189 aa). Catalysis depends on residues Ser-171, His-197, and Asp-293.

It belongs to the CheB family. In terms of processing, phosphorylated by CheA. Phosphorylation of the N-terminal regulatory domain activates the methylesterase activity.

Its subcellular location is the cytoplasm. The enzyme catalyses [protein]-L-glutamate 5-O-methyl ester + H2O = L-glutamyl-[protein] + methanol + H(+). It catalyses the reaction L-glutaminyl-[protein] + H2O = L-glutamyl-[protein] + NH4(+). Involved in chemotaxis. Part of a chemotaxis signal transduction system that modulates chemotaxis in response to various stimuli. Catalyzes the demethylation of specific methylglutamate residues introduced into the chemoreceptors (methyl-accepting chemotaxis proteins or MCP) by CheR. Also mediates the irreversible deamidation of specific glutamine residues to glutamic acid. The protein is Protein-glutamate methylesterase/protein-glutamine glutaminase 3 of Leptospira interrogans serogroup Icterohaemorrhagiae serovar copenhageni (strain Fiocruz L1-130).